Here is a 293-residue protein sequence, read N- to C-terminus: 4-hydroxy-tetrahydrodipicolinate synthase (293 aa).

Residue T47 participates in pyruvate binding. The active-site Proton donor/acceptor is the Y135. The active-site Schiff-base intermediate with substrate is K163. Pyruvate is bound at residue I204.

It belongs to the DapA family. Homotetramer; dimer of dimers.

The protein localises to the cytoplasm. The catalysed reaction is L-aspartate 4-semialdehyde + pyruvate = (2S,4S)-4-hydroxy-2,3,4,5-tetrahydrodipicolinate + H2O + H(+). Its pathway is amino-acid biosynthesis; L-lysine biosynthesis via DAP pathway; (S)-tetrahydrodipicolinate from L-aspartate: step 3/4. Catalyzes the condensation of (S)-aspartate-beta-semialdehyde [(S)-ASA] and pyruvate to 4-hydroxy-tetrahydrodipicolinate (HTPA). In Brachyspira hyodysenteriae (strain ATCC 49526 / WA1), this protein is 4-hydroxy-tetrahydrodipicolinate synthase.